We begin with the raw amino-acid sequence, 224 residues long: Cerebellin-2 (224 aa).

Residues 1–51 (MPAPGQGPRGPLLSMPGRRGALREPADFGSSLGAVLALLLLLLPACCPVRA) form the signal peptide. N-linked (GlcNAc...) asparagine glycans are attached at residues asparagine 53 and asparagine 110. The C1q domain maps to 88–224 (SGSAKVAFSA…TFSGFLVFPL (137 aa)).

As to quaternary structure, homohexamer; disulfide-linked homotrimers. The trimers are assembled via the globular C1q domains. The trimers associate via N-terminal cysteine residues to form disulfide-linked hexamers. May form homooligomers or heterooligomers with CBLN1 and CBLN3 prior to secretion. Once secreted, does not interact with other CBLN family members. Interacts with GRID2, and more weakly with GRID1. Interacts with NRXN1 and NRXN2 long and short isoforms produced by alternative promoter usage. Weakly interacts with NRXN3 short isoform and not at all with NRXN3 long isoform. As to expression, expressed in various brain regions with higher levels in the olfactory bulb, cerebral cortex, certain thalamic and hypothalamic nuclei, superior and inferior colliculi and some brainstem nuclei. Highly expressed in the dorsal medial habenula.

It is found in the secreted. Functionally, acts as a synaptic organizer in specific subsets of neurons in the brain. Essential for long-term maintenance but not establishment of excitatory synapses. Functions as part of a trans-synaptic complex by binding to postsynaptic GRID1 and presynaptic neurexins. This interaction helps regulate the activity of NMDA and AMPA receptors at hippocampal synapses without affecting synapse formation. NRXN1B-CBLN2-GRID1 complex transduce presynaptic signals into postsynaptic NMDAR response. NRXN3B-CBLN2-GRID1 complex transduce presynaptic signals into postsynaptic AMPAR response. This chain is Cerebellin-2 (Cbln2), found in Mus musculus (Mouse).